The following is a 126-amino-acid chain: Holo-[acyl-carrier-protein] synthase (126 aa).

Positions 9 and 58 each coordinate Mg(2+).

It belongs to the P-Pant transferase superfamily. AcpS family. Mg(2+) is required as a cofactor.

Its subcellular location is the cytoplasm. The catalysed reaction is apo-[ACP] + CoA = holo-[ACP] + adenosine 3',5'-bisphosphate + H(+). Its function is as follows. Transfers the 4'-phosphopantetheine moiety from coenzyme A to a Ser of acyl-carrier-protein. This Escherichia fergusonii (strain ATCC 35469 / DSM 13698 / CCUG 18766 / IAM 14443 / JCM 21226 / LMG 7866 / NBRC 102419 / NCTC 12128 / CDC 0568-73) protein is Holo-[acyl-carrier-protein] synthase.